The following is a 60-amino-acid chain: Large ribosomal subunit protein uL30 (60 aa).

This sequence belongs to the universal ribosomal protein uL30 family. Part of the 50S ribosomal subunit.

The protein is Large ribosomal subunit protein uL30 of Carboxydothermus hydrogenoformans (strain ATCC BAA-161 / DSM 6008 / Z-2901).